The sequence spans 443 residues: Endothelin receptor type B (443 aa).

The first 26 residues, 1–26 (MQPLRSLCGRALVALIFACGVAGVQS), serve as a signal peptide directing secretion. At 27–102 (EERGFPPAGA…GPIEIKDTFK (76 aa)) the chain is on the extracellular side. The interval 53 to 89 (TFWPRGSNASLPRSSSPPQMPKGGRMAGPPARTLTPP) is disordered. Positions 59–69 (SNASLPRSSSP) are enriched in polar residues. A glycan (N-linked (GlcNAc...) asparagine) is linked at asparagine 60. A helical membrane pass occupies residues 103-127 (YINTVVSCLVFVLGIIGNSTLLRII). The Cytoplasmic portion of the chain corresponds to 128-138 (YKNKCMRNGPN). Residues 139 to 164 (ILIASLALGDLLHIIIDIPINVYKLL) traverse the membrane as a helical segment. Over 165-176 (AEDWPFGVEMCK) the chain is Extracellular. Cysteine 175 and cysteine 256 form a disulfide bridge. Residues 177–198 (LVPFIQKASVGITVLSLCALSI) form a helical membrane-spanning segment. The Cytoplasmic segment spans residues 199-219 (DRYRAVASWSRIKGIGVPKWT). A helical transmembrane segment spans residues 220 to 244 (AVEIVLIWVVSVVLAVPEALGFDMI). The Extracellular segment spans residues 245 to 272 (TTDYKGNRLRICLLHPTQKTAFMQFYKT). The chain crosses the membrane as a helical span at residues 273–297 (AKDWWLFSFYFCLPLAITAFFYTLM). The Cytoplasmic segment spans residues 298–325 (TCEMLRKKSGMQIALNDHLKQRREVAKT). Serine 306 bears the Phosphoserine mark. Residues 326 to 351 (VFCLVLVFALCWLPLHLSRILKLTLY) form a helical membrane-spanning segment. Over 352-363 (DQNDSNRCELLS) the chain is Extracellular. An N-linked (GlcNAc...) asparagine glycan is attached at asparagine 354. Residues 364–390 (FLLVLDYIGINMASLNSCINPIALYLV) form a helical membrane-spanning segment. Residues 391–443 (SKRFKNCFKSCLCCWCQSFEEKQSLEEKQSCLKFKANDHGYDNFRSSNKYSSS) are Cytoplasmic-facing. S-palmitoyl cysteine attachment occurs at residues cysteine 403, cysteine 404, and cysteine 406. Serine 420 bears the Phosphoserine mark. Phosphotyrosine is present on tyrosine 440. 3 positions are modified to phosphoserine: serine 441, serine 442, and serine 443.

This sequence belongs to the G-protein coupled receptor 1 family. Endothelin receptor subfamily. EDNRB sub-subfamily.

Its subcellular location is the cell membrane. Functionally, non-specific receptor for endothelin 1, 2, and 3. Mediates its action by association with G proteins that activate a phosphatidylinositol-calcium second messenger system. The polypeptide is Endothelin receptor type B (EDNRB) (Sus scrofa (Pig)).